The following is a 772-amino-acid chain: Gelsolin (772 aa).

Residues 1–17 (LGALVVALCALSPPARA) form the signal peptide. Residues 18 to 33 (ATASRGAPQARAPQGR) constitute a propeptide that is removed on maturation. Residues 19 to 38 (TASRGAPQARAPQGRVSPMR) form a disordered region. Residues 41 to 166 (TMVVEHPEFL…YKKGGVASGF (126 aa)) form an actin-severing region. The stretch at 66-148 (FDLVPVPPNL…VQGFESATFL (83 aa)) is one Gelsolin-like 1 repeat. The residue at position 76 (Tyr76) is a Phosphotyrosine. The Ca(2+) site is built by Gly82, Asp83, Glu114, Asp126, Gly131, and Ala133. Positions 113-116 (DESG) are actin-actin interfilament contact point. 152–159 (KSGLKYKK) is an a 1,2-diacyl-sn-glycero-3-phospho-(1D-myo-inositol-4,5-bisphosphate) binding site. Val162 contacts Ca(2+). An a 1,2-diacyl-sn-glycero-3-phospho-(1D-myo-inositol-4,5-bisphosphate)-binding site is contributed by 178 to 186 (RLFQVKGRR). The Gelsolin-like 2 repeat unit spans residues 188 to 260 (VRATEVPVSW…SEEDAEPAGM (73 aa)). Residues Gly203 and Asp204 each coordinate Ca(2+). A disulfide bridge links Cys205 with Cys218. 5 residues coordinate Ca(2+): Glu226, Asp276, Glu319, Asp320, and Glu344. One copy of the Gelsolin-like 3 repeat lies at 307 to 379 (DENPFAQGAL…LPEGGETPLF (73 aa)). A phosphotyrosine mark is found at Tyr399 and Tyr455. Residues 424–772 (AAQHGMDDDG…LDRAIAELAA (349 aa)) are actin-binding, Ca-sensitive. Residues 445–526 (SNKVPVDPAT…VQGKEPAHLM (82 aa)) form a Gelsolin-like 4 repeat. The Ca(2+) site is built by Gly461, Asp462, Glu492, Asp504, Gly509, Pro511, and Thr541. The Gelsolin-like 5 repeat unit spans residues 567 to 632 (RAVEVIPKAG…AEGSEPDSFW (66 aa)). N6-acetyllysine is present on Lys574. Ca(2+)-binding residues include Asn581 and Asp582. Phosphotyrosine is present on Tyr593. Glu604 is a binding site for Ca(2+). Phosphotyrosine is present on Tyr641. Residues 671–746 (VEEVPGELMQ…VKQGFEPPSF (76 aa)) form a Gelsolin-like 6 repeat. 3 residues coordinate Ca(2+): Asp686, Asp687, and Glu709. Thr732 bears the Phosphothreonine mark.

It belongs to the villin/gelsolin family. In terms of assembly, binds to actin and to fibronectin. Identified in a complex composed of ACTA1, COBL, GSN and TMSB4X. Interacts with the inactive form of EIF2AK2/PKR. Interacts with FLII. In terms of processing, phosphorylated on tyrosine residues in vitro.

The protein localises to the cytoplasm. The protein resides in the cytoskeleton. Its subcellular location is the secreted. Its function is as follows. Calcium-regulated, actin-modulating protein that binds to the plus (or barbed) ends of actin monomers or filaments, preventing monomer exchange (end-blocking or capping). It can promote the assembly of monomers into filaments (nucleation) as well as sever filaments already formed. Plays a role in ciliogenesis. The polypeptide is Gelsolin (GSN) (Sus scrofa (Pig)).